A 91-amino-acid chain; its full sequence is Lactococcin-B immunity protein (91 aa).

In terms of biological role, imparts immunity to lactococcin-B to naturally sensitive host strains. The chain is Lactococcin-B immunity protein (lciB) from Lactococcus lactis subsp. cremoris (Streptococcus cremoris).